The following is a 150-amino-acid chain: MASAKIFLIFLLAALIATPAAFAILVPTLVSTHISGLVFCSVNGNLDVINGLSPQVFPNASVQLRCGATNVISSTITNGSGAFSLAVNTFPLLNCNLVVATPLSTCNATLQSVGRLASSLRLVNITLGSGTGLIRVGLAPTGFILNLNIN.

The first 23 residues, 1 to 23 (MASAKIFLIFLLAALIATPAAFA), serve as a signal peptide directing secretion.

Post-translationally, probably covalently linked to cuticular lipids and/or trichome exudate diterpens or sugar esters in order to increase the solubility in exudate and the dispersion on the leaf surface. Expressed in small glandular secreting trichomes (SGTs).

It localises to the secreted. Inhibits spore germination and leaf infection by fungal pathogens. The protein is Phylloplanin of Nicotiana tabacum (Common tobacco).